Consider the following 338-residue polypeptide: Ornithine carbamoyltransferase (338 aa).

Carbamoyl phosphate contacts are provided by residues arginine 116 and 143 to 146 (HPCQ). L-ornithine is bound by residues asparagine 174, aspartate 235, and 239–240 (SM). Carbamoyl phosphate is bound by residues cysteine 275 and arginine 303.

It belongs to the aspartate/ornithine carbamoyltransferase superfamily. OTCase family.

The protein localises to the cytoplasm. It carries out the reaction carbamoyl phosphate + L-ornithine = L-citrulline + phosphate + H(+). Its pathway is amino-acid biosynthesis; L-arginine biosynthesis; L-arginine from L-ornithine and carbamoyl phosphate: step 1/3. Functionally, reversibly catalyzes the transfer of the carbamoyl group from carbamoyl phosphate (CP) to the N(epsilon) atom of ornithine (ORN) to produce L-citrulline. The polypeptide is Ornithine carbamoyltransferase (Chlorobaculum tepidum (strain ATCC 49652 / DSM 12025 / NBRC 103806 / TLS) (Chlorobium tepidum)).